Here is a 180-residue protein sequence, read N- to C-terminus: NADH-quinone oxidoreductase subunit I (180 aa).

4Fe-4S ferredoxin-type domains follow at residues 50–80 (LTRDPDGEERCVACNLCAVACPVGCISLQKT) and 90–119 (EFFRINFSRCIFCGLCEEACPTTAIQLTPD). The [4Fe-4S] cluster site is built by Cys60, Cys63, Cys66, Cys70, Cys99, Cys102, Cys105, and Cys109.

Belongs to the complex I 23 kDa subunit family. NDH-1 is composed of 13 different subunits. Subunits NuoA, H, J, K, L, M, N constitute the membrane sector of the complex. Requires [4Fe-4S] cluster as cofactor.

The protein localises to the cell inner membrane. It catalyses the reaction a quinone + NADH + 5 H(+)(in) = a quinol + NAD(+) + 4 H(+)(out). Its function is as follows. NDH-1 shuttles electrons from NADH, via FMN and iron-sulfur (Fe-S) centers, to quinones in the respiratory chain. The immediate electron acceptor for the enzyme in this species is believed to be ubiquinone. Couples the redox reaction to proton translocation (for every two electrons transferred, four hydrogen ions are translocated across the cytoplasmic membrane), and thus conserves the redox energy in a proton gradient. The polypeptide is NADH-quinone oxidoreductase subunit I (Shigella dysenteriae serotype 1 (strain Sd197)).